The chain runs to 405 residues: Glucose-1-phosphate adenylyltransferase (405 aa).

Alpha-D-glucose 1-phosphate contacts are provided by residues tyrosine 96, glycine 161, 176–177 (EK), and serine 194.

Belongs to the bacterial/plant glucose-1-phosphate adenylyltransferase family. Homotetramer.

It carries out the reaction alpha-D-glucose 1-phosphate + ATP + H(+) = ADP-alpha-D-glucose + diphosphate. It participates in glycan biosynthesis; glycogen biosynthesis. Its function is as follows. Involved in the biosynthesis of ADP-glucose, a building block required for the elongation reactions to produce glycogen. Catalyzes the reaction between ATP and alpha-D-glucose 1-phosphate (G1P) to produce pyrophosphate and ADP-Glc. In Aliivibrio fischeri (strain MJ11) (Vibrio fischeri), this protein is Glucose-1-phosphate adenylyltransferase.